The chain runs to 1042 residues: Probable inorganic carbon transporter subunit DabA (1042 aa).

Residues Cys-462, Asp-464, His-721, and Cys-736 each coordinate Zn(2+).

This sequence belongs to the inorganic carbon transporter (TC 9.A.2) DabA family. Forms a complex with DabB. It depends on Zn(2+) as a cofactor.

The protein localises to the cell inner membrane. Its function is as follows. Part of an energy-coupled inorganic carbon pump. The polypeptide is Probable inorganic carbon transporter subunit DabA (Nitrosomonas eutropha (strain DSM 101675 / C91 / Nm57)).